The primary structure comprises 270 residues: Formamidopyrimidine-DNA glycosylase (270 aa).

The active-site Schiff-base intermediate with DNA is the Pro2. Glu3 acts as the Proton donor in catalysis. Lys56 acts as the Proton donor; for beta-elimination activity in catalysis. The DNA site is built by His89, Arg107, and Arg151. The segment at 236-270 adopts an FPG-type zinc-finger fold; sequence TVYGRAGEPCRVCATPIRLLRQGQRSTYYCPNCQK. Catalysis depends on Arg260, which acts as the Proton donor; for delta-elimination activity.

This sequence belongs to the FPG family. Monomer. Requires Zn(2+) as cofactor.

It catalyses the reaction Hydrolysis of DNA containing ring-opened 7-methylguanine residues, releasing 2,6-diamino-4-hydroxy-5-(N-methyl)formamidopyrimidine.. It carries out the reaction 2'-deoxyribonucleotide-(2'-deoxyribose 5'-phosphate)-2'-deoxyribonucleotide-DNA = a 3'-end 2'-deoxyribonucleotide-(2,3-dehydro-2,3-deoxyribose 5'-phosphate)-DNA + a 5'-end 5'-phospho-2'-deoxyribonucleoside-DNA + H(+). In terms of biological role, involved in base excision repair of DNA damaged by oxidation or by mutagenic agents. Acts as a DNA glycosylase that recognizes and removes damaged bases. Has a preference for oxidized purines, such as 7,8-dihydro-8-oxoguanine (8-oxoG). Has AP (apurinic/apyrimidinic) lyase activity and introduces nicks in the DNA strand. Cleaves the DNA backbone by beta-delta elimination to generate a single-strand break at the site of the removed base with both 3'- and 5'-phosphates. This Variovorax paradoxus (strain S110) protein is Formamidopyrimidine-DNA glycosylase.